The following is a 283-amino-acid chain: Pseudokinase OPG198 (283 aa).

ATP is bound by residues Met-1 and Lys-30. The Protein kinase domain maps to Met-1–Asp-283.

Belongs to the protein kinase superfamily. Ser/Thr protein kinase family. Poxviruses subfamily. Interacts with B1/VPK1. Interacts with host VRK1. Interacts with host VRK2.

Its subcellular location is the host nucleus. Both catalytically active kinases B1/VPK1 and host VRK2 repress B12 inhibitory activity in a B1/VPK1 deletion mutant strain. Functionally, pseudokinase that plays a role in viral DNA replication repression by activating the antiviral protein BANF1 and inhibiting the activity of host VRK1, a cellular modulator of BANF1. In Vaccinia virus (strain Ankara) (VACV), this protein is Pseudokinase OPG198 (OPG198).